The sequence spans 858 residues: DNA mismatch repair protein MutS (858 aa).

An ATP-binding site is contributed by Gly-600 to Ser-607. The disordered stretch occupies residues Glu-803 to Glu-823.

The protein belongs to the DNA mismatch repair MutS family.

Its function is as follows. This protein is involved in the repair of mismatches in DNA. It is possible that it carries out the mismatch recognition step. This protein has a weak ATPase activity. This Lactobacillus helveticus (strain DPC 4571) protein is DNA mismatch repair protein MutS.